The chain runs to 601 residues: Elongation factor 4 (601 aa).

One can recognise a tr-type G domain in the interval 6–188; that stretch reads SHIRNFSIIA…QIVHRVPPPE (183 aa). GTP is bound by residues 18 to 23 and 135 to 138; these read DHGKST and NKID.

This sequence belongs to the TRAFAC class translation factor GTPase superfamily. Classic translation factor GTPase family. LepA subfamily.

It localises to the cell inner membrane. The enzyme catalyses GTP + H2O = GDP + phosphate + H(+). Its function is as follows. Required for accurate and efficient protein synthesis under certain stress conditions. May act as a fidelity factor of the translation reaction, by catalyzing a one-codon backward translocation of tRNAs on improperly translocated ribosomes. Back-translocation proceeds from a post-translocation (POST) complex to a pre-translocation (PRE) complex, thus giving elongation factor G a second chance to translocate the tRNAs correctly. Binds to ribosomes in a GTP-dependent manner. The sequence is that of Elongation factor 4 from Anaeromyxobacter dehalogenans (strain 2CP-C).